Here is a 266-residue protein sequence, read N- to C-terminus: Apolipoprotein A-I (266 aa).

Positions 1–18 are cleaved as a signal peptide; it reads MKAVVLTLAVLFLTGSQA. Repeat copies occupy residues 67–88 and 89–110. Positions 67 to 266 are 10 X approximate tandem repeats; sequence LKLLDNWDTL…DEATKKLNAQ (200 aa). M109 carries the post-translational modification Methionine sulfoxide. One copy of the 3; half-length repeat lies at 111–121; the sequence is KDLEEVKQKVQ. 5 consecutive repeat copies span residues 122–143, 144–165, 166–187, 188–209, and 210–231. The 9; half-length repeat unit spans residues 232–242; sequence PALEDLRQGLL. Repeat 10 spans residues 243–266; it reads PVLESFKVGLMAIVDEATKKLNAQ.

Belongs to the apolipoprotein A1/A4/E family. In terms of assembly, homodimer. Interacts with APOA1BP and CLU. Component of a sperm activating protein complex (SPAP), consisting of APOA1, an immunoglobulin heavy chain, an immunoglobulin light chain and albumin. Interacts with NDRG1. Interacts with SCGB3A2. Interacts with NAXE and YJEFN3. Glycosylated. Post-translationally, palmitoylated. In terms of processing, phosphorylation sites are present in the extracellular medium.

Its subcellular location is the secreted. In terms of biological role, participates in the reverse transport of cholesterol from tissues to the liver for excretion by promoting cholesterol efflux from tissues and by acting as a cofactor for the lecithin cholesterol acyltransferase (LCAT). As part of the SPAP complex, activates spermatozoa motility. This chain is Apolipoprotein A-I (APOA1), found in Acinonyx jubatus (Cheetah).